We begin with the raw amino-acid sequence, 230 residues long: Interleukin-22 receptor subunit alpha-2 (230 aa).

A signal peptide spans 1 to 20 (MMPKHCLLGLLIILLSSATE). Fibronectin type-III domains follow at residues 29–128 (TPQK…TKLD) and 129–230 (PPVV…VHIP). 2 cysteine pairs are disulfide-bonded: Cys77-Cys85 and Cys205-Cys226.

Belongs to the type II cytokine receptor family. In terms of tissue distribution, highly expressed in lymph nodes and at lower levels in lung, spleen, and thymus. Not expressed in kidney, liver and heart.

The protein resides in the secreted. In terms of biological role, receptor for IL22. Binds to IL22, prevents interaction with the functional IL-22R complex and blocks the activity of IL22 (in vitro). May play an important role as an IL22 antagonist in the regulation of inflammatory responses. The sequence is that of Interleukin-22 receptor subunit alpha-2 (Il22ra2) from Mus musculus (Mouse).